The primary structure comprises 399 residues: 26S proteasome regulatory subunit S10B homolog B (399 aa).

180 to 187 (GPPGTGKT) serves as a coordination point for ATP. Lysine 203 is covalently cross-linked (Glycyl lysine isopeptide (Lys-Gly) (interchain with G-Cter in ubiquitin)).

This sequence belongs to the AAA ATPase family. In terms of assembly, component of the 19S regulatory particle (RP/PA700) base subcomplex of the 26S proteasome. The 26S proteasome is composed of a core protease (CP), known as the 20S proteasome, capped at one or both ends by the 19S regulatory particle (RP/PA700). The RP/PA700 complex is composed of at least 17 different subunits in two subcomplexes, the base and the lid, which form the portions proximal and distal to the 20S proteolytic core, respectively.

Its subcellular location is the cytoplasm. It is found in the nucleus. In terms of biological role, the 26S proteasome is involved in the ATP-dependent degradation of ubiquitinated proteins. The regulatory (or ATPase) complex confers ATP dependency and substrate specificity to the 26S complex. This is 26S proteasome regulatory subunit S10B homolog B (RPT4B) from Arabidopsis thaliana (Mouse-ear cress).